The primary structure comprises 431 residues: Large envelope protein (431 aa).

Glycine 2 carries the N-myristoyl glycine; by host lipid modification. Positions 2 to 148 are pre-S1; that stretch reads GNNIKVTFNP…PPLRDTHPHL (147 aa). Positions 2–207 are pre-S; the sequence is GNNIKVTFNP…PSTTGDPALS (206 aa). Residues 2-214 lie on the Virion surface; in external conformation side of the membrane; sequence GNNIKVTFNP…ALSPEMSPSS (213 aa). Residues 2–286 are Intravirion; in internal conformation-facing; it reads GNNIKVTFNP…NGFRWMYLRR (285 aa). A glycan (N-linked (GlcNAc...) asparagine) is linked at asparagine 3. A disordered region spans residues 115–146; sequence IPRGLVPPQTPTNRDQGRKPTPPTPPLRDTHP. A pre-S2 region spans residues 149–207; the sequence is TMKNQTFRLQGFVDGLRDLTTTERYHNAYGDPFTTLSPVVPTVSTILSPPSTTGDPALS. A helical membrane pass occupies residues 215–235; the sequence is LLGLLAGLQVVYFLWTKILTI. Topologically, residues 236–286 are intravirion; in external conformation; that stretch reads AQNLDWWWTSLSFPGGIPECTGQNSQFQTCKHLPTSCPPTCNGFRWMYLRR. The chain crosses the membrane as a helical span at residues 287–307; it reads FIIYLLVLLLCLIFLLVLLDW. Residues 308 to 379 are Virion surface-facing; the sequence is KGLIPVCPLQ…WALARFSWLN (72 aa). An N-linked (GlcNAc...) asparagine; by host glycan is attached at asparagine 351. Residues 380–400 form a helical membrane-spanning segment; sequence LLVPLLQWLGGISLIAWFLLI. The Intravirion segment spans residues 401–406; that stretch reads WMIWFW. A helical membrane pass occupies residues 407–429; it reads GPALLSILPPFIPIFVLFFLIWV. Over 430–431 the chain is Virion surface; sequence YI.

The protein belongs to the orthohepadnavirus major surface antigen family. As to quaternary structure, in its internal form (Li-HBsAg), interacts with the capsid protein and with the isoform S. Interacts with host chaperone CANX. Associates with host chaperone CANX through its pre-S2 N glycan; this association may be essential for isoform M proper secretion. In terms of assembly, interacts with isoform L. Interacts with the antigens of satellite virus HDV (HDVAgs); this interaction is required for encapsidation of HDV genomic RNA. Isoform M is N-terminally acetylated by host at a ratio of 90%, and N-glycosylated by host at the pre-S2 region. In terms of processing, myristoylated.

It is found in the virion membrane. In terms of biological role, the large envelope protein exists in two topological conformations, one which is termed 'external' or Le-HBsAg and the other 'internal' or Li-HBsAg. In its external conformation the protein attaches the virus to cell receptors and thereby initiating infection. This interaction determines the species specificity and liver tropism. This attachment induces virion internalization predominantly through caveolin-mediated endocytosis. The large envelope protein also assures fusion between virion membrane and endosomal membrane. In its internal conformation the protein plays a role in virion morphogenesis and mediates the contact with the nucleocapsid like a matrix protein. The middle envelope protein plays an important role in the budding of the virion. It is involved in the induction of budding in a nucleocapsid independent way. In this process the majority of envelope proteins bud to form subviral lipoprotein particles of 22 nm of diameter that do not contain a nucleocapsid. The protein is Large envelope protein of Woodchuck hepatitis B virus (isolate 59) (WHV).